Consider the following 101-residue polypeptide: Integration host factor subunit beta (101 aa).

Positions P57 to D101 are disordered. A compositionally biased stretch (basic and acidic residues) spans T82–D101.

Belongs to the bacterial histone-like protein family. As to quaternary structure, heterodimer of an alpha and a beta chain.

In terms of biological role, this protein is one of the two subunits of integration host factor, a specific DNA-binding protein that functions in genetic recombination as well as in transcriptional and translational control. The chain is Integration host factor subunit beta from Bradyrhizobium diazoefficiens (strain JCM 10833 / BCRC 13528 / IAM 13628 / NBRC 14792 / USDA 110).